Here is a 237-residue protein sequence, read N- to C-terminus: Bax inhibitor 1 (237 aa).

Over Met1 to Lys29 the chain is Cytoplasmic. Lys7 is covalently cross-linked (Glycyl lysine isopeptide (Lys-Gly) (interchain with G-Cter in ubiquitin)). A helical transmembrane segment spans residues Val30 to Val50. The Lumenal portion of the chain corresponds to Thr51–Arg52. A helical transmembrane segment spans residues Phe53 to Ala73. The Cytoplasmic segment spans residues Thr74 to Gly86. A helical transmembrane segment spans residues Leu87 to Ile107. Topologically, residues Ala108–Ser112 are lumenal. Residues Ile113 to Leu133 form a helical membrane-spanning segment. The Cytoplasmic segment spans residues Tyr134 to Ser139. Residues Tyr140–Gly160 traverse the membrane as a helical segment. Residues Asn161–Ser166 lie on the Lumenal side of the membrane. Residues Ile167–Phe187 form a helical membrane-spanning segment. Over Asp188–His206 the chain is Cytoplasmic. Positions Cys207 to Phe227 form an intramembrane region, helical. Topologically, residues Asn228–Lys237 are cytoplasmic.

Belongs to the BI1 family. Interacts with BCL2 and BCL2L1. Interacts with ERN1. Ubiquitinated by BFAR, leading to proteasomal degradation. As to expression, highly abundant in adult testis.

It is found in the endoplasmic reticulum membrane. In terms of biological role, endoplasmic reticulum (ER)-resident protein that confers cellular protection as an anti-apoptotic protein by limiting multiple stress-inducing pathways surrounding the endoplasmic reticulum and mitochondria. Inhibits the activities of the key sensor for the endoplasmic reticulum unfolded protein response IRE1alpha/ERN1 both directly and by blocking BAX/BAK binding. Modulates ER calcium homeostasis by acting as a calcium-leak channel. Negatively regulates autophagy and autophagosome formation, especially during periods of nutrient deprivation, and reduces cell survival during starvation. In Rattus norvegicus (Rat), this protein is Bax inhibitor 1 (Tmbim6).